The primary structure comprises 259 residues: Thiamine thiazole synthase (259 aa).

NAD(+)-binding positions include Ala33, 52-53, Gly60, Val124, and 152-154; these read ER and HVD. Fe cation-binding residues include Asp154 and His169. Residue Met219 participates in NAD(+) binding. Residue Arg229 coordinates glycine.

The protein belongs to the THI4 family. In terms of assembly, homooctamer; tetramer of dimers. Fe(2+) serves as cofactor.

It catalyses the reaction hydrogen sulfide + glycine + NAD(+) = ADP-5-ethyl-4-methylthiazole-2-carboxylate + nicotinamide + 3 H2O + H(+). It functions in the pathway cofactor biosynthesis; thiamine diphosphate biosynthesis. Its function is as follows. Involved in the biosynthesis of the thiazole moiety of thiamine. Catalyzes the conversion of NAD and glycine to adenosine diphosphate 5-(2-hydroxyethyl)-4-methylthiazole-2-carboxylate (ADT), an adenylated thiazole intermediate, using free sulfide as a source of sulfur. The protein is Thiamine thiazole synthase of Pyrobaculum neutrophilum (strain DSM 2338 / JCM 9278 / NBRC 100436 / V24Sta) (Thermoproteus neutrophilus).